The sequence spans 192 residues: uncharacterized protein (192 aa).

In terms of domain architecture, Nudix hydrolase spans 29 to 160; it reads QRQAAVLIPV…PLDVYRRGNS (132 aa). The short motif at 67-89 is the Nudix box element; the sequence is GAVDSTDASLIAAALREAQEEVA. Residues glutamate 83 and glutamate 87 each contribute to the Mg(2+) site.

The protein belongs to the Nudix hydrolase family. PCD1 subfamily. The cofactor is Mn(2+). Mg(2+) is required as a cofactor.

Functionally, probably mediates the hydrolysis of some nucleoside diphosphate derivatives. This is an uncharacterized protein from Salmonella dublin (strain CT_02021853).